The following is a 283-amino-acid chain: Thymidylate synthase (283 aa).

Arg-22 is a binding site for dUMP. Cys-160 (nucleophile) is an active-site residue. Residues 180-183 (RSCD), Asn-191, and 221-223 (HIY) each bind dUMP. Asp-183 lines the (6R)-5,10-methylene-5,6,7,8-tetrahydrofolate pocket. Ser-282 lines the (6R)-5,10-methylene-5,6,7,8-tetrahydrofolate pocket.

Belongs to the thymidylate synthase family. Bacterial-type ThyA subfamily. In terms of assembly, homodimer.

The protein resides in the cytoplasm. The enzyme catalyses dUMP + (6R)-5,10-methylene-5,6,7,8-tetrahydrofolate = 7,8-dihydrofolate + dTMP. Its pathway is pyrimidine metabolism; dTTP biosynthesis. Its function is as follows. Catalyzes the reductive methylation of 2'-deoxyuridine-5'-monophosphate (dUMP) to 2'-deoxythymidine-5'-monophosphate (dTMP) while utilizing 5,10-methylenetetrahydrofolate (mTHF) as the methyl donor and reductant in the reaction, yielding dihydrofolate (DHF) as a by-product. This enzymatic reaction provides an intracellular de novo source of dTMP, an essential precursor for DNA biosynthesis. The sequence is that of Thymidylate synthase from Haemophilus influenzae (strain PittEE).